The primary structure comprises 452 residues: Probable 1,4-beta-D-glucan cellobiohydrolase A (452 aa).

An N-terminal signal peptide occupies residues 1-17; the sequence is MHQRALLFSALAVAANA. Residue asparagine 81 is glycosylated (N-linked (GlcNAc...) asparagine). Residue glutamate 226 is the Nucleophile of the active site. Glutamate 231 acts as the Proton donor in catalysis. Residue asparagine 284 is glycosylated (N-linked (GlcNAc...) asparagine). The tract at residues 406–432 is disordered; it reads DPSKPGVARGTCEHGAGDPEKVESQHP. Positions 416–431 are enriched in basic and acidic residues; the sequence is TCEHGAGDPEKVESQH.

Belongs to the glycosyl hydrolase 7 (cellulase C) family.

Its subcellular location is the secreted. It carries out the reaction Hydrolysis of (1-&gt;4)-beta-D-glucosidic linkages in cellulose and cellotetraose, releasing cellobiose from the non-reducing ends of the chains.. Its function is as follows. The biological conversion of cellulose to glucose generally requires three types of hydrolytic enzymes: (1) Endoglucanases which cut internal beta-1,4-glucosidic bonds; (2) Exocellobiohydrolases that cut the disaccharide cellobiose from the non-reducing end of the cellulose polymer chain; (3) Beta-1,4-glucosidases which hydrolyze the cellobiose and other short cello-oligosaccharides to glucose. The chain is Probable 1,4-beta-D-glucan cellobiohydrolase A (cbhA) from Neosartorya fischeri (strain ATCC 1020 / DSM 3700 / CBS 544.65 / FGSC A1164 / JCM 1740 / NRRL 181 / WB 181) (Aspergillus fischerianus).